The following is a 228-amino-acid chain: ATP synthase subunit beta, mitochondrial (228 aa).

The transit peptide at 1-31 directs the protein to the mitochondrion; sequence MFALRAAAKADKNLLPFLGQLSRSHAAKAAK. ATP is bound at residue 183–190; sequence GGAGVGKT.

This sequence belongs to the ATPase alpha/beta chains family. F-type ATPases have 2 components, CF(1) - the catalytic core - and CF(0) - the membrane proton channel. CF(1) has five subunits: alpha(3), beta(3), gamma(1), delta(1), epsilon(1). CF(0) has three main subunits: a, b and c.

The protein resides in the mitochondrion. It localises to the mitochondrion inner membrane. It carries out the reaction ATP + H2O + 4 H(+)(in) = ADP + phosphate + 5 H(+)(out). Mitochondrial membrane ATP synthase (F(1)F(0) ATP synthase or Complex V) produces ATP from ADP in the presence of a proton gradient across the membrane which is generated by electron transport complexes of the respiratory chain. F-type ATPases consist of two structural domains, F(1) - containing the extramembraneous catalytic core, and F(0) - containing the membrane proton channel, linked together by a central stalk and a peripheral stalk. During catalysis, ATP synthesis in the catalytic domain of F(1) is coupled via a rotary mechanism of the central stalk subunits to proton translocation. Subunits alpha and beta form the catalytic core in F(1). Rotation of the central stalk against the surrounding alpha(3)beta(3) subunits leads to hydrolysis of ATP in three separate catalytic sites on the beta subunits. The polypeptide is ATP synthase subunit beta, mitochondrial (Drosophila virilis (Fruit fly)).